The primary structure comprises 963 residues: Protein translocase subunit SecA (963 aa).

Residues Q87, 105–109 (GEGKT), and D524 each bind ATP. Residues C946, C948, C957, and H958 each coordinate Zn(2+).

The protein belongs to the SecA family. As to quaternary structure, monomer and homodimer. Part of the essential Sec protein translocation apparatus which comprises SecA, SecYEG and auxiliary proteins SecDF-YajC and YidC. It depends on Zn(2+) as a cofactor.

The protein localises to the cell inner membrane. Its subcellular location is the cytoplasm. The enzyme catalyses ATP + H2O + cellular proteinSide 1 = ADP + phosphate + cellular proteinSide 2.. Its function is as follows. Part of the Sec protein translocase complex. Interacts with the SecYEG preprotein conducting channel. Has a central role in coupling the hydrolysis of ATP to the transfer of proteins into and across the cell membrane, serving both as a receptor for the preprotein-SecB complex and as an ATP-driven molecular motor driving the stepwise translocation of polypeptide chains across the membrane. This chain is Protein translocase subunit SecA, found in Methylobacterium radiotolerans (strain ATCC 27329 / DSM 1819 / JCM 2831 / NBRC 15690 / NCIMB 10815 / 0-1).